The sequence spans 94 residues: ESAT-6-like protein EsxO (94 aa).

It belongs to the WXG100 family. ESAT-6 subfamily. As to quaternary structure, forms a complex with EsxP.

The protein resides in the secreted. In Mycobacterium tuberculosis (strain CDC 1551 / Oshkosh), this protein is ESAT-6-like protein EsxO.